The following is a 249-amino-acid chain: DNA polymerase sliding clamp (249 aa).

This sequence belongs to the PCNA family. The subunits circularize to form a toroid; DNA passes through its center. Replication factor C (RFC) is required to load the toroid on the DNA. Homotrimer. Interacts with NucS.

Sliding clamp subunit that acts as a moving platform for DNA processing. Responsible for tethering the catalytic subunit of DNA polymerase and other proteins to DNA during high-speed replication. Regulates activity of NucS endonuclease and prevents non-specific cleavage. The sequence is that of DNA polymerase sliding clamp from Pyrococcus abyssi (strain GE5 / Orsay).